The sequence spans 464 residues: Bifunctional protein GlmU (464 aa).

Residues 1 to 232 form a pyrophosphorylase region; the sequence is MKHDELAAVI…ADEAMGINDR (232 aa). UDP-N-acetyl-alpha-D-glucosamine is bound by residues 11–14, Lys-25, Gln-76, and 81–82; these read LAAG and GT. Asp-106 lines the Mg(2+) pocket. UDP-N-acetyl-alpha-D-glucosamine contacts are provided by Gly-143, Glu-157, Asn-172, and Asn-230. Residue Asn-230 participates in Mg(2+) binding. Residues 233 to 253 are linker; that stretch reads VQLAQASALMRRRINENLMRA. The tract at residues 254 to 464 is N-acetyltransferase; sequence GVSFIDPEQT…RHDPKCKNKD (211 aa). Residues Arg-336 and Lys-354 each contribute to the UDP-N-acetyl-alpha-D-glucosamine site. Catalysis depends on His-366, which acts as the Proton acceptor. UDP-N-acetyl-alpha-D-glucosamine is bound by residues Tyr-369 and Asn-380. Acetyl-CoA-binding positions include 389 to 390, Ser-408, Ala-426, and Arg-443; that span reads NY.

In the N-terminal section; belongs to the N-acetylglucosamine-1-phosphate uridyltransferase family. The protein in the C-terminal section; belongs to the transferase hexapeptide repeat family. In terms of assembly, homotrimer. Mg(2+) serves as cofactor.

The protein resides in the cytoplasm. The catalysed reaction is alpha-D-glucosamine 1-phosphate + acetyl-CoA = N-acetyl-alpha-D-glucosamine 1-phosphate + CoA + H(+). The enzyme catalyses N-acetyl-alpha-D-glucosamine 1-phosphate + UTP + H(+) = UDP-N-acetyl-alpha-D-glucosamine + diphosphate. The protein operates within nucleotide-sugar biosynthesis; UDP-N-acetyl-alpha-D-glucosamine biosynthesis; N-acetyl-alpha-D-glucosamine 1-phosphate from alpha-D-glucosamine 6-phosphate (route II): step 2/2. It functions in the pathway nucleotide-sugar biosynthesis; UDP-N-acetyl-alpha-D-glucosamine biosynthesis; UDP-N-acetyl-alpha-D-glucosamine from N-acetyl-alpha-D-glucosamine 1-phosphate: step 1/1. Its pathway is bacterial outer membrane biogenesis; LPS lipid A biosynthesis. Functionally, catalyzes the last two sequential reactions in the de novo biosynthetic pathway for UDP-N-acetylglucosamine (UDP-GlcNAc). The C-terminal domain catalyzes the transfer of acetyl group from acetyl coenzyme A to glucosamine-1-phosphate (GlcN-1-P) to produce N-acetylglucosamine-1-phosphate (GlcNAc-1-P), which is converted into UDP-GlcNAc by the transfer of uridine 5-monophosphate (from uridine 5-triphosphate), a reaction catalyzed by the N-terminal domain. The protein is Bifunctional protein GlmU of Syntrophotalea carbinolica (strain DSM 2380 / NBRC 103641 / GraBd1) (Pelobacter carbinolicus).